Here is a 53-residue protein sequence, read N- to C-terminus: Rubredoxin (53 aa).

The 53-residue stretch at Met1–Ala53 folds into the Rubredoxin-like domain. Residues Cys6, Cys9, Cys39, and Cys42 each coordinate Fe cation.

Belongs to the rubredoxin family. Fe(3+) serves as cofactor.

In terms of biological role, rubredoxin is a small nonheme, iron protein lacking acid-labile sulfide. Its single Fe, chelated to 4 Cys, functions as an electron acceptor and may also stabilize the conformation of the molecule. The chain is Rubredoxin from Butyribacterium methylotrophicum.